Consider the following 238-residue polypeptide: Cysteine-rich venom protein natrin-2 (238 aa).

Residues 1–19 form the signal peptide; it reads MIAFIVLLSLAAVLQQSSG. In terms of domain architecture, SCP spans 38–164; it reads VDKHNALRRS…SSKYLYVCQY (127 aa). Cystine bridges form between Cys-75/Cys-153, Cys-92/Cys-165, Cys-148/Cys-162, Cys-184/Cys-191, Cys-187/Cys-196, Cys-200/Cys-233, Cys-209/Cys-227, and Cys-218/Cys-231. The region spanning 200 to 233 is the ShKT domain; it reads CKHHNVFSNCQSLAKQNACQTEWMKSKCAASCFC.

As to expression, expressed by the venom gland.

It localises to the secreted. Its function is as follows. Inhibits carbachol-induced muscle contraction and weakly blocks muscle contraction evoked by potassium. The protein is Cysteine-rich venom protein natrin-2 of Naja atra (Chinese cobra).